The primary structure comprises 182 residues: UPF0301 protein NMB1336 (182 aa).

The protein belongs to the UPF0301 (AlgH) family.

The sequence is that of UPF0301 protein NMB1336 from Neisseria meningitidis serogroup B (strain ATCC BAA-335 / MC58).